Here is a 478-residue protein sequence, read N- to C-terminus: ATP synthase subunit beta (478 aa).

163–170 (GGAGVGKT) lines the ATP pocket.

The protein belongs to the ATPase alpha/beta chains family. As to quaternary structure, F-type ATPases have 2 components, CF(1) - the catalytic core - and CF(0) - the membrane proton channel. CF(1) has five subunits: alpha(3), beta(3), gamma(1), delta(1), epsilon(1). CF(0) has three main subunits: a(1), b(2) and c(9-12). The alpha and beta chains form an alternating ring which encloses part of the gamma chain. CF(1) is attached to CF(0) by a central stalk formed by the gamma and epsilon chains, while a peripheral stalk is formed by the delta and b chains.

The protein localises to the cell inner membrane. The catalysed reaction is ATP + H2O + 4 H(+)(in) = ADP + phosphate + 5 H(+)(out). Its function is as follows. Produces ATP from ADP in the presence of a proton gradient across the membrane. The catalytic sites are hosted primarily by the beta subunits. This Aquifex pyrophilus protein is ATP synthase subunit beta.